The chain runs to 194 residues: Imidazoleglycerol-phosphate dehydratase (194 aa).

Belongs to the imidazoleglycerol-phosphate dehydratase family.

The protein localises to the cytoplasm. The enzyme catalyses D-erythro-1-(imidazol-4-yl)glycerol 3-phosphate = 3-(imidazol-4-yl)-2-oxopropyl phosphate + H2O. Its pathway is amino-acid biosynthesis; L-histidine biosynthesis; L-histidine from 5-phospho-alpha-D-ribose 1-diphosphate: step 6/9. This is Imidazoleglycerol-phosphate dehydratase from Bacillus cereus (strain ZK / E33L).